Here is a 271-residue protein sequence, read N- to C-terminus: Formamidopyrimidine-DNA glycosylase (271 aa).

Pro2 functions as the Schiff-base intermediate with DNA in the catalytic mechanism. Glu3 acts as the Proton donor in catalysis. The Proton donor; for beta-elimination activity role is filled by Lys58. DNA contacts are provided by His91, Arg110, and Arg152. An FPG-type zinc finger spans residues 237 to 271 (SVYGRNDAPCPGCGAPIRRSRQGGRSTYFCDRCQH). Arg261 functions as the Proton donor; for delta-elimination activity in the catalytic mechanism.

It belongs to the FPG family. In terms of assembly, monomer. Zn(2+) is required as a cofactor.

The enzyme catalyses Hydrolysis of DNA containing ring-opened 7-methylguanine residues, releasing 2,6-diamino-4-hydroxy-5-(N-methyl)formamidopyrimidine.. It catalyses the reaction 2'-deoxyribonucleotide-(2'-deoxyribose 5'-phosphate)-2'-deoxyribonucleotide-DNA = a 3'-end 2'-deoxyribonucleotide-(2,3-dehydro-2,3-deoxyribose 5'-phosphate)-DNA + a 5'-end 5'-phospho-2'-deoxyribonucleoside-DNA + H(+). In terms of biological role, involved in base excision repair of DNA damaged by oxidation or by mutagenic agents. Acts as a DNA glycosylase that recognizes and removes damaged bases. Has a preference for oxidized purines, such as 7,8-dihydro-8-oxoguanine (8-oxoG). Has AP (apurinic/apyrimidinic) lyase activity and introduces nicks in the DNA strand. Cleaves the DNA backbone by beta-delta elimination to generate a single-strand break at the site of the removed base with both 3'- and 5'-phosphates. In Geotalea uraniireducens (strain Rf4) (Geobacter uraniireducens), this protein is Formamidopyrimidine-DNA glycosylase.